Consider the following 98-residue polypeptide: NADH-ubiquinone oxidoreductase chain 4L (98 aa).

The next 3 helical transmembrane spans lie at 1–21 (MSMV…GLLM), 29–49 (SLLC…VTIL), and 61–81 (IILL…LVMV).

Belongs to the complex I subunit 4L family. As to quaternary structure, core subunit of respiratory chain NADH dehydrogenase (Complex I) which is composed of 45 different subunits.

The protein resides in the mitochondrion inner membrane. The enzyme catalyses a ubiquinone + NADH + 5 H(+)(in) = a ubiquinol + NAD(+) + 4 H(+)(out). In terms of biological role, core subunit of the mitochondrial membrane respiratory chain NADH dehydrogenase (Complex I) which catalyzes electron transfer from NADH through the respiratory chain, using ubiquinone as an electron acceptor. Part of the enzyme membrane arm which is embedded in the lipid bilayer and involved in proton translocation. This chain is NADH-ubiquinone oxidoreductase chain 4L (MT-ND4L), found in Pusa hispida (Ringed seal).